The chain runs to 150 residues: Protein adenylyltransferase MntA (150 aa).

A GSX(10)DXD motif motif is present at residues 32–46 (GSRATGNINANSDWD). Catalysis depends on residues Asp44 and Asp46. Mg(2+) contacts are provided by Asp44, Asp46, and Asp86.

The protein belongs to the MntA antitoxin family. Forms a complex with HepT, probably MntA(1):HepT(2) in vivo; can only be purified when both 'Arg-102' and 'Tyr-109' (or 'His-107' and 'Tyr-109') of HepThave been mutated. The fully di-AMPylated HepT homodimer is not found in a complex with MntA. It depends on Mg(2+) as a cofactor.

It catalyses the reaction L-tyrosyl-[protein] + ATP = O-(5'-adenylyl)-L-tyrosyl-[protein] + diphosphate. It carries out the reaction O-(5'-adenylyl)-L-tyrosyl-[protein] + ATP = O-[5'-(adenylyl-(5'-&gt;3')-adenylyl)]-L-tyrosyl-[protein] + diphosphate. Antitoxin component of a type VII toxin-antitoxin (TA) system. Upon cloning in E.coli neutralizes the effect of cognate toxin HepT. Neutralization is mostly due to di-AMPylation of toxin by this enzyme. Successively di-AMPylates HepT on 'Tyr-109'. In vitro will use ATP, dATP, GTP, dGTP, TTP or UTP to generate a mono-modified protein, but requires a purine nucleotide for the second modification reaction (ATP, dATP or GTP). This is Protein adenylyltransferase MntA from Aphanizomenon flos-aquae (strain 2012/KM1/D3).